We begin with the raw amino-acid sequence, 254 residues long: NAD-dependent protein deacylase (254 aa).

In terms of domain architecture, Deacetylase sirtuin-type spans 1 to 250 (MERLEEARKR…LPPSPEDQAE (250 aa)). 22-41 (GAGISKPSGIPTFRDAEGLW) is a binding site for NAD(+). Tyr66 and Arg69 together coordinate substrate. An NAD(+)-binding site is contributed by 104–107 (QNVD). The active-site Proton acceptor is His122. The Zn(2+) site is built by Cys130, Cys133, Cys149, and Cys152. NAD(+)-binding positions include 189–191 (GTS), 215–217 (NPE), and Ala233.

Belongs to the sirtuin family. Class III subfamily. Zn(2+) is required as a cofactor.

It localises to the cytoplasm. The enzyme catalyses N(6)-acetyl-L-lysyl-[protein] + NAD(+) + H2O = 2''-O-acetyl-ADP-D-ribose + nicotinamide + L-lysyl-[protein]. The catalysed reaction is N(6)-succinyl-L-lysyl-[protein] + NAD(+) + H2O = 2''-O-succinyl-ADP-D-ribose + nicotinamide + L-lysyl-[protein]. NAD-dependent lysine deacetylase and desuccinylase that specifically removes acetyl and succinyl groups on target proteins. Modulates the activities of several proteins which are inactive in their acylated form. This chain is NAD-dependent protein deacylase, found in Thermus thermophilus (strain ATCC BAA-163 / DSM 7039 / HB27).